A 452-amino-acid polypeptide reads, in one-letter code: Trigger factor (452 aa).

Residues 171–256 (GDRVTVSFKG…ATKLEAPQET (86 aa)) form the PPIase FKBP-type domain.

Belongs to the FKBP-type PPIase family. Tig subfamily.

The protein resides in the cytoplasm. The catalysed reaction is [protein]-peptidylproline (omega=180) = [protein]-peptidylproline (omega=0). In terms of biological role, involved in protein export. Acts as a chaperone by maintaining the newly synthesized protein in an open conformation. Functions as a peptidyl-prolyl cis-trans isomerase. In Rhodopseudomonas palustris (strain ATCC BAA-98 / CGA009), this protein is Trigger factor.